A 278-amino-acid chain; its full sequence is 3-methyl-2-oxobutanoate hydroxymethyltransferase (278 aa).

D43 and D82 together coordinate Mg(2+). 3-methyl-2-oxobutanoate is bound by residues 43 to 44 (DS), D82, and K112. E114 serves as a coordination point for Mg(2+). E181 (proton acceptor) is an active-site residue.

Belongs to the PanB family. As to quaternary structure, homodecamer; pentamer of dimers. Mg(2+) is required as a cofactor.

Its subcellular location is the cytoplasm. It carries out the reaction 3-methyl-2-oxobutanoate + (6R)-5,10-methylene-5,6,7,8-tetrahydrofolate + H2O = 2-dehydropantoate + (6S)-5,6,7,8-tetrahydrofolate. Its pathway is cofactor biosynthesis; (R)-pantothenate biosynthesis; (R)-pantoate from 3-methyl-2-oxobutanoate: step 1/2. Catalyzes the reversible reaction in which hydroxymethyl group from 5,10-methylenetetrahydrofolate is transferred onto alpha-ketoisovalerate to form ketopantoate. This is 3-methyl-2-oxobutanoate hydroxymethyltransferase from Bacillus cereus (strain ATCC 10987 / NRS 248).